The sequence spans 282 residues: tRNA N(3)-cytidine methyltransferase METTL6 (282 aa).

Residues W45, Y49, G87, D110, D136, L137, and I157 each coordinate S-adenosyl-L-methionine.

The protein belongs to the methyltransferase superfamily. METL family. As to quaternary structure, monomer. Interacts with SARS1/SerRS; interaction is mediated via tRNA(Ser) and is required for N(3)-methylcytidine methylation.

It is found in the cytoplasm. The protein resides in the nucleus. It catalyses the reaction cytidine(32) in tRNA(Ser) + S-adenosyl-L-methionine = N(3)-methylcytidine(32) in tRNA(Ser) + S-adenosyl-L-homocysteine + H(+). Functionally, S-adenosyl-L-methionine-dependent methyltransferase that mediates N(3)-methylcytidine modification of residue 32 of the tRNA anticodon loop of tRNA(Ser), including tRNA(Ser)(UGA) and tRNA(Ser)(GCU). Interaction with SARS1/SerRS is required for N(3)-methylcytidine methylation. The chain is tRNA N(3)-cytidine methyltransferase METTL6 (METTL6) from Pongo abelii (Sumatran orangutan).